The chain runs to 1080 residues: Protein transport protein SEC24 C (1080 aa).

Positions 1 to 10 (MVAPVPPGAP) are enriched in pro residues. 3 disordered regions span residues 1–189 (MVAP…SGMI), 201–220 (GSGGFPRGTQFPGAAVTTPQ), and 316–367 (TAMG…SDYV). Residues 12-43 (PNSQQNSGPPNFYPGSQGNSNALADNMQNLSL) show a composition bias toward polar residues. A compositionally biased stretch (pro residues) spans 45-70 (RPPPMMPGSGPRPPPPFGQSPQPFPQ). Composition is skewed to low complexity over residues 71–84 (QSPSYGAPQRGPSP), 142–160 (PAASSSGFPAFGPSGSVAA), and 178–189 (GSGMSMPPSGMI). The span at 340–356 (GSSSSPTVFETRQSNQA) shows a compositional bias: polar residues. Residues C430, C433, C452, and C455 each coordinate Zn(2+). Residues 430–455 (CSRCKGYINPFMKFIDQGRKFICNFC) form a zinc finger-like region.

This sequence belongs to the SEC23/SEC24 family. SEC24 subfamily. As to quaternary structure, component of the coat protein complex II (COPII), composed of at least five proteins: the Sec23/24 complex, the Sec13/31 complex and Sar1. In terms of tissue distribution, mainly expressed at low levels in pollen, leaves, roots and stems.

Its subcellular location is the cytoplasmic vesicle. It is found in the COPII-coated vesicle membrane. The protein resides in the endoplasmic reticulum membrane. The protein localises to the golgi apparatus membrane. In terms of biological role, component of the coat protein complex II (COPII), that covers ER-derived vesicles involved in transport from the endoplasmic reticulum to the Golgi apparatus. COPII is composed of at least five proteins: the SEC23/24 complex, the SEC13/31 complex, and the protein SAR1. Acts in the cytoplasm to promote the transport of secretory, plasma membrane, and vacuolar proteins from the endoplasmic reticulum to the Golgi complex. The protein is Protein transport protein SEC24 C of Arabidopsis thaliana (Mouse-ear cress).